The primary structure comprises 420 residues: MLKAVILIGGPQKGTRFRPLSFEVPKPLFPVAGVPMIQHHIEACAQVPGMQEILLIGFYQPDEPLTQFLEAAQQEFNLPVRYLQEFAPLGTGGGLYHFRDQILAGSPEAFFVLNADVCSDFPLSAMLEAHRRQRHPFLLLGTTANRTQSLNYGCIVENPQTHEVLHYVEKPSTFISDIINCGIYLFSPEALKPLRDVFQRNQQDGQLEDSPGLWPGAGTIRLEQDVFSALAGQGQIYVHLTDGIWSQIKSAGSALYASRLYLSRYQDTHPERLAKHTPGGPRIRGNVYIHPTAKVAPSAVLGPNVSIGKGVTVGEGVRLRESIVLHGATLQEHTCVLHSIVGWGSTVGRWARVEGTPNDPNPNDPRARMDSESLFKDGKLLPAITILGCRVRIPAEVLILNSIVLPHKELSRSFTNQIIL.

The interval 2-251 is substrate-binding domain; the sequence is LKAVILIGGP…DGIWSQIKSA (250 aa). Residues E85 and Q247 each coordinate GDP-alpha-D-mannose. The segment at 273-420 is hexapeptide repeat domain; sequence LAKHTPGGPR…SRSFTNQIIL (148 aa). Residues 356 to 384 form a C-loop region; that stretch reads TPNDPNPNDPRARMDSESLFKDGKLLPAI.

This sequence belongs to the transferase hexapeptide repeat family. Component of the GMPPA-GMPPB mannose-1-phosphate guanylyltransferase complex composed of 4 GMPPA subunits and 8 GMPPB subunits; the complex is organized into three layers, a central layer made up of 2 GMPPA dimers sandwiched between two layers each made up of 2 GMPPB dimers.

The protein localises to the cytoplasm. Functionally, regulatory subunit of the GMPPA-GMPPB mannose-1-phosphate guanylyltransferase complex; reduces the catalytic activity of GMPPB when part of the complex. Mediates allosteric feedback inhibition of GMPPB catalytic activity upon binding GDP-alpha-D-mannose. Together with GMPPB regulates GDP-alpha-D-mannose levels. This chain is Mannose-1-phosphate guanylyltransferase regulatory subunit alpha (GMPPA), found in Papio anubis (Olive baboon).